Here is a 467-residue protein sequence, read N- to C-terminus: Glutamate--tRNA ligase (467 aa).

Residues 13–23 (PSPTGYLHVGG) carry the 'HIGH' region motif. The short motif at 245 to 249 (KLSKR) is the 'KMSKS' region element. Lys248 contributes to the ATP binding site.

It belongs to the class-I aminoacyl-tRNA synthetase family. Glutamate--tRNA ligase type 1 subfamily. As to quaternary structure, monomer.

The protein localises to the cytoplasm. The enzyme catalyses tRNA(Glu) + L-glutamate + ATP = L-glutamyl-tRNA(Glu) + AMP + diphosphate. In terms of biological role, catalyzes the attachment of glutamate to tRNA(Glu) in a two-step reaction: glutamate is first activated by ATP to form Glu-AMP and then transferred to the acceptor end of tRNA(Glu). This is Glutamate--tRNA ligase from Herminiimonas arsenicoxydans.